The sequence spans 711 residues: Long-chain-fatty-acid--CoA ligase 4 (711 aa).

A helical; Signal-anchor for type III membrane protein membrane pass occupies residues leucine 8–isoleucine 28. Topologically, residues proline 29 to lysine 711 are cytoplasmic. Serine 447 is modified (phosphoserine).

It belongs to the ATP-dependent AMP-binding enzyme family. It depends on Mg(2+) as a cofactor.

It is found in the mitochondrion outer membrane. The protein resides in the peroxisome membrane. It localises to the microsome membrane. Its subcellular location is the endoplasmic reticulum membrane. The protein localises to the cell membrane. It catalyses the reaction a long-chain fatty acid + ATP + CoA = a long-chain fatty acyl-CoA + AMP + diphosphate. The catalysed reaction is (5Z,8Z,11Z,14Z)-eicosatetraenoate + ATP + CoA = (5Z,8Z,11Z,14Z)-eicosatetraenoyl-CoA + AMP + diphosphate. It carries out the reaction 15-hydroxy-(5Z,8Z,11Z,13E)-eicosatetraenoate + ATP + CoA = 15-hydroxy-(5Z,8Z,11Z,13E)-eicosatetraenoyl-CoA + AMP + diphosphate. The enzyme catalyses 12-hydroxy-(5Z,8Z,10E,14Z)-eicosatetraenoate + ATP + CoA = 12-hydroxy-(5Z,8Z,10E,14Z)-eicosatetraenoyl-CoA + AMP + diphosphate. It catalyses the reaction 5-hydroxy-(6E,8Z,11Z,14Z)-eicosatetraenoate + ATP + CoA = 5-hydroxy-(6E,8Z,11Z,14Z)-eicosatetraenoyl-CoA + AMP + diphosphate. The catalysed reaction is 5,6-epoxy-(8Z,11Z,14Z)-eicosatrienoate + ATP + CoA = 5,6-epoxy-(8Z,11Z,14Z)-eicosatrienoyl-CoA + AMP + diphosphate. It carries out the reaction 14,15-epoxy-(5Z,8Z,11Z)-eicosatrienoate + ATP + CoA = 14,15-epoxy-(5Z,8Z,11Z)-eicosatrienoyl-CoA + AMP + diphosphate. The enzyme catalyses 11,12-epoxy-(5Z,8Z,14Z)-eicosatrienoate + ATP + CoA = 11,12-epoxy-(5Z,8Z,14Z)-eicosatrienoyl-CoA + AMP + diphosphate. It catalyses the reaction 8,9-epoxy-(5Z,11Z,14Z)-eicosatrienoate + ATP + CoA = 8,9-epoxy-(5Z,11Z,14Z)-eicosatrienoyl-CoA + AMP + diphosphate. The catalysed reaction is hexadecanoate + ATP + CoA = hexadecanoyl-CoA + AMP + diphosphate. It carries out the reaction (E)-hexadec-2-enoate + ATP + CoA = (2E)-hexadecenoyl-CoA + AMP + diphosphate. Its activity is regulated as follows. Both triacsin C and rosiglitazone inhibit arachidonoyl-CoA ligase activity. Its function is as follows. Catalyzes the conversion of long-chain fatty acids to their active form acyl-CoA for both synthesis of cellular lipids, and degradation via beta-oxidation. Preferentially activates arachidonate and eicosapentaenoate as substrates. Preferentially activates 8,9-EET &gt; 14,15-EET &gt; 5,6-EET &gt; 11,12-EET. Modulates glucose-stimulated insulin secretion by regulating the levels of unesterified EETs. Modulates prostaglandin E2 secretion. This is Long-chain-fatty-acid--CoA ligase 4 (Acsl4) from Rattus norvegicus (Rat).